A 161-amino-acid chain; its full sequence is Nucleotide-binding protein Pnuc_0290 (161 aa).

This sequence belongs to the YajQ family.

In terms of biological role, nucleotide-binding protein. The protein is Nucleotide-binding protein Pnuc_0290 of Polynucleobacter asymbioticus (strain DSM 18221 / CIP 109841 / QLW-P1DMWA-1) (Polynucleobacter necessarius subsp. asymbioticus).